A 177-amino-acid polypeptide reads, in one-letter code: Peptide methionine sulfoxide reductase MsrA (177 aa).

The active site involves C15.

It belongs to the MsrA Met sulfoxide reductase family.

The catalysed reaction is L-methionyl-[protein] + [thioredoxin]-disulfide + H2O = L-methionyl-(S)-S-oxide-[protein] + [thioredoxin]-dithiol. It carries out the reaction [thioredoxin]-disulfide + L-methionine + H2O = L-methionine (S)-S-oxide + [thioredoxin]-dithiol. Has an important function as a repair enzyme for proteins that have been inactivated by oxidation. Catalyzes the reversible oxidation-reduction of methionine sulfoxide in proteins to methionine. The protein is Peptide methionine sulfoxide reductase MsrA of Listeria innocua serovar 6a (strain ATCC BAA-680 / CLIP 11262).